A 1380-amino-acid chain; its full sequence is DNA-directed RNA polymerase subunit beta (1380 aa).

This sequence belongs to the RNA polymerase beta chain family. The RNAP catalytic core consists of 2 alpha, 1 beta, 1 beta' and 1 omega subunit. When a sigma factor is associated with the core the holoenzyme is formed, which can initiate transcription.

It catalyses the reaction RNA(n) + a ribonucleoside 5'-triphosphate = RNA(n+1) + diphosphate. In terms of biological role, DNA-dependent RNA polymerase catalyzes the transcription of DNA into RNA using the four ribonucleoside triphosphates as substrates. In Ehrlichia chaffeensis (strain ATCC CRL-10679 / Arkansas), this protein is DNA-directed RNA polymerase subunit beta.